The sequence spans 198 residues: Ribosomal RNA small subunit methyltransferase G (198 aa).

S-adenosyl-L-methionine-binding positions include G74, F79, 123–124 (IQ), and R136.

Belongs to the methyltransferase superfamily. RNA methyltransferase RsmG family.

The protein localises to the cytoplasm. The catalysed reaction is guanosine(527) in 16S rRNA + S-adenosyl-L-methionine = N(7)-methylguanosine(527) in 16S rRNA + S-adenosyl-L-homocysteine. Its function is as follows. Specifically methylates the N7 position of guanine in position 527 of 16S rRNA. The chain is Ribosomal RNA small subunit methyltransferase G from Orientia tsutsugamushi (strain Boryong) (Rickettsia tsutsugamushi).